The sequence spans 790 residues: Solute carrier family 26 member 9 (790 aa).

Residues 1–70 (MNQPRPRYVV…WLPKYKIKDY (70 aa)) are Cytoplasmic-facing. The chain crosses the membrane as a helical span at residues 71-96 (IIPDLLGGLSGGCIQVPQGMAFALLA). Topologically, residues 97–100 (NLPA) are extracellular. The chain crosses the membrane as a helical span at residues 101–109 (VNGLYSSFF). At 110–129 (PLLTYFFLGGIHQMVPGTFA) the chain is on the cytoplasmic side. Residues 130-142 (VISILVGNICLQL) form a helical membrane-spanning segment. Topologically, residues 143–162 (APESKFQIFNNVTNETYVDT) are extracellular. Residues 163-191 (AAMEAERLHVSATLACLTAVIQMALGFMQ) form a helical membrane-spanning segment. Topologically, residues 192-201 (FGFVAIYLSE) are cytoplasmic. A helical transmembrane segment spans residues 202–224 (SFIRGFMTAAGLQILISVLKYIF). The Extracellular segment spans residues 225 to 237 (GLTIPSYTGPGSI). Residues 238-246 (VFTFIDICK) constitute an intramembrane region (helical). Over 247-254 (NLPHTNIA) the chain is Extracellular. Residues 255–275 (SLIFALVSGVFLVLVKELNAR) form a helical membrane-spanning segment. The Cytoplasmic segment spans residues 276–286 (YMHKIHFPIPT). A helical membrane pass occupies residues 287–299 (EMIVVVVATAISG). At 300–334 (SCKMPKKYHMQIVGEIRQGFPTPVAPMVSQWKGMV) the chain is on the extracellular side. Residues 335 to 358 (GTAFSLAIVGYVINLAMGRTLASK) traverse the membrane as a helical segment. Over 359 to 365 (HGYDVDS) the chain is Cytoplasmic. The helical transmembrane segment at 366 to 379 (NQEMIALGCSNFFG) threads the bilayer. Over 380-390 (SFFKIHVICCA) the chain is Extracellular. Residues 391–400 (LSVTLAVDGA) traverse the membrane as a helical segment. The Cytoplasmic segment spans residues 401–405 (GGKSQ). The helical transmembrane segment at 406–419 (VASLCVSLVVMITM) threads the bilayer. At 420-431 (LVLGSYLYPLPK) the chain is on the extracellular side. Residues 432 to 457 (AVLGALIAVNLKNSLKQLTDPYYLWR) traverse the membrane as a helical segment. Topologically, residues 458-461 (KSKL) are cytoplasmic. Residues 462–476 (DCCVWVVSFLSSFFL) traverse the membrane as a helical segment. The Extracellular portion of the chain corresponds to 477–479 (SLP). A helical membrane pass occupies residues 480–498 (YGVAVGVAFSILVVIFQTQ). Residues 499 to 790 (FRNGSTLAQV…MFHTETLTAL (292 aa)) are Cytoplasmic-facing. Residues 519–737 (TYNRAQEIAG…PSIHDAVLFA (219 aa)) form the STAS domain.

Belongs to the SLC26A/SulP transporter (TC 2.A.53) family. In terms of assembly, homodimer. As to expression, expressed in stomach and trachea. Abundantly expressed in the apical domain of the surface epithelial cells and the deep cells in the gastric gland. Also expressed in heart, brain, lung and liver.

The protein resides in the cell membrane. It is found in the endomembrane system. It carries out the reaction chloride(in) = chloride(out). It catalyses the reaction hydrogencarbonate(in) + chloride(out) = hydrogencarbonate(out) + chloride(in). Inhibited by ammonium and thiosulfate. Functionally, ion transporter that can act both as an ion channel and anion exchanger. Mainly acts as a chloride channel, which mediate uncoupled chloride anion transport in an alternate-access mechanism where a saturable binding site is alternately exposed to either one or the other side of the membrane. Also acts as a DIDS- and thiosulfate- sensitive anion exchanger the exchange of chloride for bicarbonate ions across the cell membrane. This is Solute carrier family 26 member 9 from Mus musculus (Mouse).